The following is a 259-amino-acid chain: UPF0246 protein PSHAa2558 (259 aa).

This sequence belongs to the UPF0246 family.

The sequence is that of UPF0246 protein PSHAa2558 from Pseudoalteromonas translucida (strain TAC 125).